Here is a 245-residue protein sequence, read N- to C-terminus: Protein canopy homolog 4 (245 aa).

The first 27 residues, 1-27 (MCGLRFIMGPVRLEILLFILAAYGAWA), serve as a signal peptide directing secretion. Cystine bridges form between cysteine 44–cysteine 202, cysteine 47–cysteine 190, and cysteine 100–cysteine 162. The tract at residues 207 to 245 (WTGKEKISDGQEEADDEEEEEEEEITKTSGNPKHDPEDL) is disordered. Residues 209 to 237 (GKEKISDGQEEADDEEEEEEEEITKTSGN) adopt a coiled-coil conformation. Positions 216–230 (GQEEADDEEEEEEEE) are enriched in acidic residues.

The protein belongs to the canopy family. In terms of assembly, interacts with TLR4. In terms of tissue distribution, highly expressed in lung, spleen, thymus, and uterus. Moderately expressed in kidney, stomach and placenta. Weakly expressed in brain, heart, liver, small intestine, skeletal muscle and testis.

It localises to the secreted. Plays a role in the regulation of the cell surface expression of TLR4. The chain is Protein canopy homolog 4 (Cnpy4) from Mus musculus (Mouse).